Here is a 416-residue protein sequence, read N- to C-terminus: Serine hydroxymethyltransferase (416 aa).

Residues L118 and 122–124 (GHL) contribute to the (6S)-5,6,7,8-tetrahydrofolate site. The residue at position 226 (K226) is an N6-(pyridoxal phosphate)lysine. (6S)-5,6,7,8-tetrahydrofolate contacts are provided by residues E242 and 350-352 (SPF).

Belongs to the SHMT family. As to quaternary structure, homodimer. It depends on pyridoxal 5'-phosphate as a cofactor.

Its subcellular location is the cytoplasm. It catalyses the reaction (6R)-5,10-methylene-5,6,7,8-tetrahydrofolate + glycine + H2O = (6S)-5,6,7,8-tetrahydrofolate + L-serine. It functions in the pathway one-carbon metabolism; tetrahydrofolate interconversion. The protein operates within amino-acid biosynthesis; glycine biosynthesis; glycine from L-serine: step 1/1. Catalyzes the reversible interconversion of serine and glycine with tetrahydrofolate (THF) serving as the one-carbon carrier. This reaction serves as the major source of one-carbon groups required for the biosynthesis of purines, thymidylate, methionine, and other important biomolecules. Also exhibits THF-independent aldolase activity toward beta-hydroxyamino acids, producing glycine and aldehydes, via a retro-aldol mechanism. The chain is Serine hydroxymethyltransferase from Wolinella succinogenes (strain ATCC 29543 / DSM 1740 / CCUG 13145 / JCM 31913 / LMG 7466 / NCTC 11488 / FDC 602W) (Vibrio succinogenes).